Reading from the N-terminus, the 431-residue chain is Adenylosuccinate synthetase (431 aa).

Residues 13–19 (GDEGKGK) and 41–43 (GHT) each bind GTP. Asp14 functions as the Proton acceptor in the catalytic mechanism. The Mg(2+) site is built by Asp14 and Gly41. Residues 14–17 (DEGK), 39–42 (NAGH), Thr130, Arg144, Gln225, Thr240, and Arg304 each bind IMP. The active-site Proton donor is His42. A substrate-binding site is contributed by 300–306 (TTTGRSR). GTP is bound by residues Arg306, 332–334 (KLD), and 414–416 (STG).

The protein belongs to the adenylosuccinate synthetase family. Homodimer. Mg(2+) is required as a cofactor.

The protein localises to the cytoplasm. It catalyses the reaction IMP + L-aspartate + GTP = N(6)-(1,2-dicarboxyethyl)-AMP + GDP + phosphate + 2 H(+). Its pathway is purine metabolism; AMP biosynthesis via de novo pathway; AMP from IMP: step 1/2. Plays an important role in the de novo pathway of purine nucleotide biosynthesis. Catalyzes the first committed step in the biosynthesis of AMP from IMP. The sequence is that of Adenylosuccinate synthetase from Marinobacter nauticus (strain ATCC 700491 / DSM 11845 / VT8) (Marinobacter aquaeolei).